A 227-amino-acid chain; its full sequence is dTTP/UTP pyrophosphatase (227 aa).

The interval 1-21 is disordered; the sequence is MNDLPRAELPGSGSPNPESLI. The active-site Proton acceptor is Asp87.

The protein belongs to the Maf family. YhdE subfamily. It depends on a divalent metal cation as a cofactor.

It is found in the cytoplasm. The enzyme catalyses dTTP + H2O = dTMP + diphosphate + H(+). It catalyses the reaction UTP + H2O = UMP + diphosphate + H(+). Nucleoside triphosphate pyrophosphatase that hydrolyzes dTTP and UTP. May have a dual role in cell division arrest and in preventing the incorporation of modified nucleotides into cellular nucleic acids. The chain is dTTP/UTP pyrophosphatase from Rhodopirellula baltica (strain DSM 10527 / NCIMB 13988 / SH1).